The following is a 424-amino-acid chain: Tubby protein homolog 1 (424 aa).

The disordered stretch occupies residues 19 to 47 (MLEDKQKQKRHQSAGSVRTTTTTSSMSMN). The span at 37-47 (TTTTTSSMSMN) shows a compositional bias: low complexity.

Belongs to the TUB family. Interacts with rgb-3.

Its subcellular location is the cytoplasm. It is found in the cell projection. The protein localises to the axon. It localises to the dendrite. The protein resides in the cilium. Has a role in fat regulation independent of daf-16. Implicated in ciliar sensory function which is required for normal sensory behavior such as chemotaxis. Functions in life span control via the insulin/IGF-1 pathway. Thought to be involved in neuronal trafficking. The protein is Tubby protein homolog 1 of Caenorhabditis briggsae.